Consider the following 688-residue polypeptide: Protein adenylyltransferase SelO, mitochondrial (688 aa).

The transit peptide at 1–23 (MGEKRTIIKALKNSAASHFIKKL) directs the protein to the mitochondrion. ATP contacts are provided by Gly-132, Gly-134, Arg-135, Lys-156, Asp-168, Gly-169, Arg-220, and Arg-227. Asp-338 serves as the catalytic Proton acceptor. The Mg(2+) site is built by Asn-339 and Asp-348. Position 348 (Asp-348) interacts with ATP.

It belongs to the SELO family. The cofactor is Mg(2+). In terms of processing, forms probably one or more intrachain disulfide bridges.

It localises to the mitochondrion. It catalyses the reaction L-tyrosyl-[protein] + ATP = O-(5'-adenylyl)-L-tyrosyl-[protein] + diphosphate. Its function is as follows. Catalyzes the transfer of adenosine 5'-monophosphate (AMP) to Tyr residues of target mitochondrial proteins (AMPylation). Involved in redox homeostasis by regulating the cellular response to oxidative stress. Regulates protein S-glutathionylation levels possibly by AMPylation of deglutathionylation enzymes such as glutaredoxins. The chain is Protein adenylyltransferase SelO, mitochondrial from Saccharomyces cerevisiae (strain ATCC 204508 / S288c) (Baker's yeast).